Consider the following 282-residue polypeptide: MTSADYASRQRAIIAELNVAPHFDAEAEIARRIDFLAQYLRSTGLRTYVLGISGGVDSSTAGRLAQLSVERLRADGYDARFIAMRLPNGVQNDEEDAQRALAFVRADEVLTVDVKPAADAMLRSLVASGHAFETPAQQDFVHGNIKARERMIAQYAVAGARRGIVIGTDHAAESLMGFFTKFGDGGADILPLAGLSKRRVRGVARALGGEELIVMKVPTADLEELRPLRPDEHAYGVTYDEIDDFLEGKPVADRVYETVLRFYDGSRHKRALPYTMFDWPAA.

Residue 51 to 58 (GISGGVDS) coordinates ATP. Mg(2+) is bound at residue aspartate 57. Arginine 148 lines the deamido-NAD(+) pocket. Residue threonine 168 participates in ATP binding. Position 173 (glutamate 173) interacts with Mg(2+). Lysine 181 and aspartate 188 together coordinate deamido-NAD(+). 2 residues coordinate ATP: lysine 197 and threonine 219. Residue 268 to 269 (HK) coordinates deamido-NAD(+).

This sequence belongs to the NAD synthetase family. Homodimer.

The enzyme catalyses deamido-NAD(+) + NH4(+) + ATP = AMP + diphosphate + NAD(+) + H(+). It participates in cofactor biosynthesis; NAD(+) biosynthesis; NAD(+) from deamido-NAD(+) (ammonia route): step 1/1. Catalyzes the ATP-dependent amidation of deamido-NAD to form NAD. Uses ammonia as a nitrogen source. This chain is NH(3)-dependent NAD(+) synthetase, found in Burkholderia cenocepacia (strain HI2424).